The chain runs to 529 residues: Extracellular signal-regulated kinase 1 (529 aa).

2 disordered regions span residues 1-20 (MEPEFDHFQSQMDSDNTHQS) and 100-131 (QQNQQQQSQQMTQQQLQQLMPPPPTSDTSNFN). Positions 8-20 (FQSQMDSDNTHQS) are enriched in polar residues. A compositionally biased stretch (low complexity) spans 100–117 (QQNQQQQSQQMTQQQLQQ). Positions 149-439 (YSIVKCIGHG…EALAHPYFQS (291 aa)) constitute a Protein kinase domain. Residues 155-163 (IGHGAYGVV) and Lys-178 contribute to the ATP site. Asp-275 acts as the Proton acceptor in catalysis. Residue Thr-309 is modified to Phosphothreonine. A TXY motif is present at residues 309–311 (TEY). Tyr-311 is subject to Phosphotyrosine.

Belongs to the protein kinase superfamily. CMGC Ser/Thr protein kinase family. MAP kinase subfamily. Requires Mg(2+) as cofactor. Post-translationally, dually phosphorylated on Thr-309 and Tyr-311, which activates the enzyme.

The enzyme catalyses L-seryl-[protein] + ATP = O-phospho-L-seryl-[protein] + ADP + H(+). The catalysed reaction is L-threonyl-[protein] + ATP = O-phospho-L-threonyl-[protein] + ADP + H(+). Its activity is regulated as follows. Activated by tyrosine and threonine phosphorylation. Its function is as follows. Kinase involved in a signal transduction pathway. The protein is Extracellular signal-regulated kinase 1 (erkA) of Dictyostelium discoideum (Social amoeba).